A 266-amino-acid polypeptide reads, in one-letter code: Syntaxin-71 (266 aa).

The Cytoplasmic segment spans residues 1 to 243 (MTVIDILTRV…TVNQLRSSRN (243 aa)). The residue at position 12 (Ser12) is a Phosphoserine. Positions 44–87 (ETQIETALEKAELVTKEKNRAAAVAMNAEIRRTKARLSEEVPKL) form a coiled coil. A disordered region spans residues 122–146 (DGTAGGPKSTSAWTPSSTTSRPDIK). Residues 130–141 (STSAWTPSSTTS) are compositionally biased toward low complexity. Positions 172–234 (EMRKIKQEQG…KNTNVRLKDT (63 aa)) constitute a t-SNARE coiled-coil homology domain. Residues 244 to 264 (FCIDIVLLCIVLGIAAYLYNV) form a helical; Anchor for type IV membrane protein membrane-spanning segment. Over 265–266 (LK) the chain is Vesicular.

This sequence belongs to the syntaxin family. As to quaternary structure, part of the t-SNARE complex. In terms of tissue distribution, expressed in root, leaf, stem, flower and silique.

The protein localises to the membrane. Its function is as follows. Vesicle trafficking protein that functions in the secretory pathway. This is Syntaxin-71 (SYP71) from Arabidopsis thaliana (Mouse-ear cress).